Consider the following 612-residue polypeptide: Arginine--tRNA ligase (612 aa).

Positions 152–162 (PNIAKEMHVGH) match the 'HIGH' region motif.

This sequence belongs to the class-I aminoacyl-tRNA synthetase family. Monomer.

Its subcellular location is the cytoplasm. It carries out the reaction tRNA(Arg) + L-arginine + ATP = L-arginyl-tRNA(Arg) + AMP + diphosphate. This chain is Arginine--tRNA ligase, found in Prochlorococcus marinus (strain MIT 9313).